The sequence spans 498 residues: ATP synthase subunit beta, chloroplastic (498 aa).

172-179 is a binding site for ATP; it reads GGAGVGKT.

The protein belongs to the ATPase alpha/beta chains family. In terms of assembly, F-type ATPases have 2 components, CF(1) - the catalytic core - and CF(0) - the membrane proton channel. CF(1) has five subunits: alpha(3), beta(3), gamma(1), delta(1), epsilon(1). CF(0) has four main subunits: a(1), b(1), b'(1) and c(9-12).

Its subcellular location is the plastid. The protein resides in the chloroplast thylakoid membrane. It catalyses the reaction ATP + H2O + 4 H(+)(in) = ADP + phosphate + 5 H(+)(out). Produces ATP from ADP in the presence of a proton gradient across the membrane. The catalytic sites are hosted primarily by the beta subunits. The chain is ATP synthase subunit beta, chloroplastic from Vitis vinifera (Grape).